The sequence spans 491 residues: 3-octaprenyl-4-hydroxybenzoate carboxy-lyase (491 aa).

N176 contributes to the Mn(2+) binding site. Prenylated FMN is bound by residues I179–R181, R193–L195, and R198–G199. A Mn(2+)-binding site is contributed by E242. D291 serves as the catalytic Proton donor.

This sequence belongs to the UbiD family. In terms of assembly, homohexamer. Prenylated FMN serves as cofactor. Mn(2+) is required as a cofactor.

It is found in the cell membrane. The catalysed reaction is a 4-hydroxy-3-(all-trans-polyprenyl)benzoate + H(+) = a 2-(all-trans-polyprenyl)phenol + CO2. It participates in cofactor biosynthesis; ubiquinone biosynthesis. In terms of biological role, catalyzes the decarboxylation of 3-octaprenyl-4-hydroxy benzoate to 2-octaprenylphenol, an intermediate step in ubiquinone biosynthesis. The sequence is that of 3-octaprenyl-4-hydroxybenzoate carboxy-lyase from Chromobacterium violaceum (strain ATCC 12472 / DSM 30191 / JCM 1249 / CCUG 213 / NBRC 12614 / NCIMB 9131 / NCTC 9757 / MK).